A 259-amino-acid chain; its full sequence is Tryptophan synthase alpha chain (259 aa).

Catalysis depends on proton acceptor residues glutamate 35 and aspartate 46.

It belongs to the TrpA family. As to quaternary structure, tetramer of two alpha and two beta chains.

It carries out the reaction (1S,2R)-1-C-(indol-3-yl)glycerol 3-phosphate + L-serine = D-glyceraldehyde 3-phosphate + L-tryptophan + H2O. It participates in amino-acid biosynthesis; L-tryptophan biosynthesis; L-tryptophan from chorismate: step 5/5. In terms of biological role, the alpha subunit is responsible for the aldol cleavage of indoleglycerol phosphate to indole and glyceraldehyde 3-phosphate. The sequence is that of Tryptophan synthase alpha chain from Methanococcus maripaludis (strain C7 / ATCC BAA-1331).